A 292-amino-acid chain; its full sequence is Peroxidase 2 (292 aa).

4 disulfide bridges follow: C7/C86, C40/C45, C92/C288, and C171/C199. H38 acts as the Proton acceptor in catalysis. 5 residues coordinate Ca(2+): D39, V42, G44, D46, and S48. N-linked (GlcNAc...) asparagine glycosylation occurs at N68. P134 lines the substrate pocket. An N-linked (GlcNAc...) asparagine glycan is attached at N139. H164 contacts heme b. T165 contacts Ca(2+). Residue N179 is glycosylated (N-linked (GlcNAc...) asparagine). Ca(2+)-binding residues include D210, T213, and D218.

This sequence belongs to the peroxidase family. Classical plant (class III) peroxidase subfamily. It depends on Ca(2+) as a cofactor. Heme b is required as a cofactor.

The enzyme catalyses 2 a phenolic donor + H2O2 = 2 a phenolic radical donor + 2 H2O. Removal of H(2)O(2), oxidation of toxic reductants, biosynthesis and degradation of lignin, suberization, auxin catabolism, response to environmental stresses such as wounding, pathogen attack and oxidative stress. These functions might be dependent on each isozyme/isoform in each plant tissue. The protein is Peroxidase 2 of Cucumis sativus (Cucumber).